The chain runs to 495 residues: Probable cytosol aminopeptidase (495 aa).

Mn(2+)-binding residues include lysine 264 and aspartate 269. Lysine 276 is an active-site residue. Mn(2+) contacts are provided by aspartate 287, aspartate 346, and glutamate 348. Arginine 350 is an active-site residue.

It belongs to the peptidase M17 family. Requires Mn(2+) as cofactor.

Its subcellular location is the cytoplasm. The enzyme catalyses Release of an N-terminal amino acid, Xaa-|-Yaa-, in which Xaa is preferably Leu, but may be other amino acids including Pro although not Arg or Lys, and Yaa may be Pro. Amino acid amides and methyl esters are also readily hydrolyzed, but rates on arylamides are exceedingly low.. It carries out the reaction Release of an N-terminal amino acid, preferentially leucine, but not glutamic or aspartic acids.. Its function is as follows. Presumably involved in the processing and regular turnover of intracellular proteins. Catalyzes the removal of unsubstituted N-terminal amino acids from various peptides. In Geotalea uraniireducens (strain Rf4) (Geobacter uraniireducens), this protein is Probable cytosol aminopeptidase.